We begin with the raw amino-acid sequence, 511 residues long: Maturase K (511 aa).

Belongs to the intron maturase 2 family. MatK subfamily.

It localises to the plastid. The protein resides in the chloroplast. In terms of biological role, usually encoded in the trnK tRNA gene intron. Probably assists in splicing its own and other chloroplast group II introns. The polypeptide is Maturase K (Triticum aestivum (Wheat)).